Here is a 664-residue protein sequence, read N- to C-terminus: DNA ligase (664 aa).

Residues 32 to 36 (DKEYD) and 80 to 81 (SL) contribute to the NAD(+) site. Residue Lys122 is the N6-AMP-lysine intermediate of the active site. The NAD(+) site is built by Arg144, Glu178, and Lys314. The Zn(2+) site is built by Cys407, Cys410, Cys423, and Cys429. Residues 587-664 (IDENPFMDKT…NEEEFSNKIK (78 aa)) enclose the BRCT domain.

It belongs to the NAD-dependent DNA ligase family. LigA subfamily. Mg(2+) serves as cofactor. It depends on Mn(2+) as a cofactor.

The enzyme catalyses NAD(+) + (deoxyribonucleotide)n-3'-hydroxyl + 5'-phospho-(deoxyribonucleotide)m = (deoxyribonucleotide)n+m + AMP + beta-nicotinamide D-nucleotide.. DNA ligase that catalyzes the formation of phosphodiester linkages between 5'-phosphoryl and 3'-hydroxyl groups in double-stranded DNA using NAD as a coenzyme and as the energy source for the reaction. It is essential for DNA replication and repair of damaged DNA. This chain is DNA ligase, found in Clostridium botulinum (strain Okra / Type B1).